Here is a 180-residue protein sequence, read N- to C-terminus: Large ribosomal subunit protein uL6 (180 aa).

This sequence belongs to the universal ribosomal protein uL6 family. As to quaternary structure, part of the 50S ribosomal subunit.

Functionally, this protein binds to the 23S rRNA, and is important in its secondary structure. It is located near the subunit interface in the base of the L7/L12 stalk, and near the tRNA binding site of the peptidyltransferase center. This is Large ribosomal subunit protein uL6 from Anaeromyxobacter sp. (strain K).